The primary structure comprises 227 residues: MKISYHGHSVVKIETNGKVIVIDPFLTGNPKTDLKAEDVKVDAILLSHGHGDHVGDTVEIAKRNDAIVVAPFELATFLGWQGVKTHPMHIGGAHEFDFGKVKFTQAFHGSSYIDEENKTITYTGMPAGILFTAEEKTIYHAGDTALFSDMKLIGDRNDIELAFLPIGDNFTMGPEDAALAVKWIDAKTVVPMHYNTFPVIEQDPHRFVEKLTNCTGRVLEVGESITL.

The protein belongs to the UPF0173 family.

This is UPF0173 metal-dependent hydrolase Bcer98_3294 from Bacillus cytotoxicus (strain DSM 22905 / CIP 110041 / 391-98 / NVH 391-98).